The chain runs to 372 residues: Putative aminopeptidase SgcX (372 aa).

2 residues coordinate a divalent metal cation: H67 and D180. Residue E212 is the Proton acceptor of the active site. Residues E213, D235, and H329 each coordinate a divalent metal cation.

Belongs to the peptidase M42 family. A divalent metal cation serves as cofactor.

The polypeptide is Putative aminopeptidase SgcX (sgcX) (Salmonella typhimurium (strain LT2 / SGSC1412 / ATCC 700720)).